The chain runs to 644 residues: DNA mismatch repair protein MutL (644 aa).

Residues 340–360 (KKEKDESVQEQFKFEHTKPRE) are compositionally biased toward basic and acidic residues. Positions 340 to 425 (KKEKDESVQE…ETVREEKEWT (86 aa)) are disordered. Residues 387–400 (QLWQPPKQEWQPPQ) show a composition bias toward low complexity. The span at 416 to 425 (ETVREEKEWT) shows a compositional bias: basic and acidic residues.

This sequence belongs to the DNA mismatch repair MutL/HexB family.

This protein is involved in the repair of mismatches in DNA. It is required for dam-dependent methyl-directed DNA mismatch repair. May act as a 'molecular matchmaker', a protein that promotes the formation of a stable complex between two or more DNA-binding proteins in an ATP-dependent manner without itself being part of a final effector complex. The chain is DNA mismatch repair protein MutL from Bacillus mycoides (strain KBAB4) (Bacillus weihenstephanensis).